We begin with the raw amino-acid sequence, 159 residues long: 3-dehydroquinate dehydratase (159 aa).

The active-site Proton acceptor is the tyrosine 22. The substrate site is built by asparagine 73, histidine 79, and aspartate 86. Catalysis depends on histidine 99, which acts as the Proton donor. Substrate contacts are provided by residues 100–101 and arginine 110; that span reads IS.

The protein belongs to the type-II 3-dehydroquinase family. As to quaternary structure, homododecamer.

The catalysed reaction is 3-dehydroquinate = 3-dehydroshikimate + H2O. Its pathway is metabolic intermediate biosynthesis; chorismate biosynthesis; chorismate from D-erythrose 4-phosphate and phosphoenolpyruvate: step 3/7. Its function is as follows. Catalyzes a trans-dehydration via an enolate intermediate. In Campylobacter jejuni subsp. doylei (strain ATCC BAA-1458 / RM4099 / 269.97), this protein is 3-dehydroquinate dehydratase.